The primary structure comprises 342 residues: RNA 3'-terminal phosphate cyclase (342 aa).

ATP-binding positions include glutamine 100 and phenylalanine 283 to glutamine 287. The Tele-AMP-histidine intermediate role is filled by histidine 307.

This sequence belongs to the RNA 3'-terminal cyclase family. Type 1 subfamily.

It localises to the cytoplasm. The catalysed reaction is a 3'-end 3'-phospho-ribonucleotide-RNA + ATP = a 3'-end 2',3'-cyclophospho-ribonucleotide-RNA + AMP + diphosphate. In terms of biological role, catalyzes the conversion of 3'-phosphate to a 2',3'-cyclic phosphodiester at the end of RNA. The mechanism of action of the enzyme occurs in 3 steps: (A) adenylation of the enzyme by ATP; (B) transfer of adenylate to an RNA-N3'P to produce RNA-N3'PP5'A; (C) and attack of the adjacent 2'-hydroxyl on the 3'-phosphorus in the diester linkage to produce the cyclic end product. The biological role of this enzyme is unknown but it is likely to function in some aspects of cellular RNA processing. The chain is RNA 3'-terminal phosphate cyclase (rtcA) from Pyrococcus abyssi (strain GE5 / Orsay).